Reading from the N-terminus, the 66-residue chain is uncharacterized protein (66 aa).

An HTH cro/C1-type domain is found at 5–59; sequence LKYYRALHNLTQEDLAKKLGVSRQTIIAIEKGKYDPSLKLAFKIAKFFGVKIEDI. Residues 16 to 35 constitute a DNA-binding region (H-T-H motif); it reads QEDLAKKLGVSRQTIIAIEK.

This is an uncharacterized protein from Methanocaldococcus jannaschii (strain ATCC 43067 / DSM 2661 / JAL-1 / JCM 10045 / NBRC 100440) (Methanococcus jannaschii).